Consider the following 311-residue polypeptide: Immune-associated nucleotide-binding protein 7 (311 aa).

In terms of domain architecture, AIG1-type G spans 14-222 (KQAENIVLVG…YTDDTYHMIK (209 aa)). The tract at residues 23–30 (GRTGNGKS) is G1. Residues 23–31 (GRTGNGKSA) and Ser44 contribute to the GTP site. A G2 region spans residues 50–54 (GVTMK). The tract at residues 72-75 (DTPG) is G3. The tract at residues 142 to 145 (TGGD) is G4. Residues 181 to 183 (DNK) are G5. Residue Asn182 participates in GTP binding. Residues 218–295 (YHMIKEESEK…TQENNELNLA (78 aa)) are a coiled coil.

The protein belongs to the TRAFAC class TrmE-Era-EngA-EngB-Septin-like GTPase superfamily. AIG1/Toc34/Toc159-like paraseptin GTPase family. IAN subfamily. In terms of tissue distribution, ubiquitous.

In Arabidopsis thaliana (Mouse-ear cress), this protein is Immune-associated nucleotide-binding protein 7.